The chain runs to 242 residues: Platinum sensitivity protein 3 (242 aa).

In terms of assembly, component of the SHU complex composed of at least CSM2, PSY3, SHU1 and SHU2.

The protein localises to the nucleus. Required for resistance to the DNA-damaging agents methyl methanesulfonate (MMS), cisplatin and oxaliplatin, but not to mitomycin C. Plays a role in protection against mutation accumulation. May be a component of the recombination-repair pathway. This chain is Platinum sensitivity protein 3 (PSY3), found in Saccharomyces cerevisiae (strain ATCC 204508 / S288c) (Baker's yeast).